The sequence spans 253 residues: Succinate dehydrogenase iron-sulfur subunit (253 aa).

The [2Fe-2S] cluster site is built by Cys64, Cys69, and Cys84. Residues 146–174 (RQWAYELSKCMTCGVCLEACPNVNSKSKF) enclose the 4Fe-4S ferredoxin-type domain. Residues Cys155, Cys158, and Cys161 each contribute to the [4Fe-4S] cluster site. Cys165, Cys212, and Cys218 together coordinate [3Fe-4S] cluster. Residue Cys222 participates in [4Fe-4S] cluster binding.

It belongs to the succinate dehydrogenase/fumarate reductase iron-sulfur protein family. In terms of assembly, in B.subtilis succinate dehydrogenase forms part of an enzyme complex containing three subunits: a flavoprotein, an iron-sulfur protein and cytochrome b-558. [2Fe-2S] cluster serves as cofactor. It depends on [3Fe-4S] cluster as a cofactor. Requires [4Fe-4S] cluster as cofactor.

It carries out the reaction a quinone + succinate = fumarate + a quinol. It participates in carbohydrate metabolism; tricarboxylic acid cycle; fumarate from succinate (bacterial route): step 1/1. The protein is Succinate dehydrogenase iron-sulfur subunit (sdhB) of Bacillus subtilis (strain 168).